Reading from the N-terminus, the 284-residue chain is Succinate dehydrogenase [ubiquinone] iron-sulfur subunit, mitochondrial (284 aa).

The N-terminal 26 residues, 1–26 (MAAVVFSLRRSGPVFRLPGVLQVCRG), are a transit peptide targeting the mitochondrion. A 2Fe-2S ferredoxin-type domain is found at 44 to 137 (KKFAIYRWDP…VSKIYPLPHM (94 aa)). Residues cysteine 97, cysteine 102, cysteine 105, and cysteine 117 each coordinate [2Fe-2S] cluster. The 4Fe-4S ferredoxin-type domain occupies 180–210 (DRDKLDGLYECILCACCSTSCPSYWWNADKY). Cysteine 190, cysteine 193, and cysteine 196 together coordinate [4Fe-4S] cluster. A [3Fe-4S] cluster-binding site is contributed by cysteine 200. Residue tryptophan 205 coordinates a ubiquinone. [3Fe-4S] cluster-binding residues include cysteine 247 and cysteine 253. Cysteine 257 contributes to the [4Fe-4S] cluster binding site.

The protein belongs to the succinate dehydrogenase/fumarate reductase iron-sulfur protein family. As to quaternary structure, component of complex II composed of four subunits: the flavoprotein (FP) sdha, iron-sulfur protein (IP) sdhb, and a cytochrome b composed of sdhc and sdhd. [2Fe-2S] cluster is required as a cofactor. The cofactor is [3Fe-4S] cluster. Requires [4Fe-4S] cluster as cofactor.

The protein resides in the mitochondrion inner membrane. It carries out the reaction a quinone + succinate = fumarate + a quinol. It catalyses the reaction (R)-malate + a quinone = enol-oxaloacetate + a quinol. The catalysed reaction is (S)-malate + a quinone = enol-oxaloacetate + a quinol. Its pathway is carbohydrate metabolism; tricarboxylic acid cycle; fumarate from succinate (eukaryal route): step 1/1. With respect to regulation, enol-oxaloacetate inhibits the succinate dehydrogenase activity. In terms of biological role, iron-sulfur protein (IP) subunit of the succinate dehydrogenase complex (mitochondrial respiratory chain complex II), responsible for transferring electrons from succinate to ubiquinone (coenzyme Q). SDH also oxidizes malate to the non-canonical enol form of oxaloacetate, enol-oxaloacetate. Enol-oxaloacetate, which is a potent inhibitor of the succinate dehydrogenase activity, is further isomerized into keto-oxaloacetate. This is Succinate dehydrogenase [ubiquinone] iron-sulfur subunit, mitochondrial (sdhb) from Xenopus tropicalis (Western clawed frog).